We begin with the raw amino-acid sequence, 228 residues long: Dolichyl-phosphate hexose transferase HVO_1613 (228 aa).

Belongs to the glycosyltransferase 2 family.

In terms of biological role, glycosyltransferase that adds a monosaccharide to dolichol phosphate, thereby being responsible for generating one of the three monosaccharide-modified dolichol phosphates. The subunit onto which additional sugars are added is not known. In Haloferax volcanii (strain ATCC 29605 / DSM 3757 / JCM 8879 / NBRC 14742 / NCIMB 2012 / VKM B-1768 / DS2) (Halobacterium volcanii), this protein is Dolichyl-phosphate hexose transferase HVO_1613.